The following is a 122-amino-acid chain: Large ribosomal subunit protein uL14c (122 aa).

The protein belongs to the universal ribosomal protein uL14 family. As to quaternary structure, part of the 50S ribosomal subunit.

The protein resides in the plastid. It localises to the chloroplast. In terms of biological role, binds to 23S rRNA. This chain is Large ribosomal subunit protein uL14c, found in Oltmannsiellopsis viridis (Marine flagellate).